The primary structure comprises 381 residues: Selenoprotein P (381 aa).

The N-terminal stretch at 1 to 19 is a signal peptide; that stretch reads MWRSLGLALALCLLPLGGT. The N-linked (GlcNAc...) asparagine glycan is linked to Asn-46. Position 59 (Sec-59) is a non-standard amino acid, selenocysteine. Asn-83, Asn-119, and Asn-128 each carry an N-linked (GlcNAc...) asparagine glycan. The tract at residues 202 to 268 is disordered; sequence SPHYHHEHHH…ENRDMPGSED (67 aa). Residues 204–217 show a composition bias toward basic residues; the sequence is HYHHEHHHNHRHQH. Residues 218–229 are compositionally biased toward polar residues; it reads LGSSELSENQQP. Residues 243-255 are compositionally biased toward basic residues; that stretch reads LHHHHKHKGQHRQ. Ser-266 bears the Phosphoserine mark. 2 non-standard amino acids (selenocysteine) are found at residues Sec-318 and Sec-330. Asn-338 carries an N-linked (GlcNAc...) asparagine glycan. Residues Sec-345, Sec-352, Sec-367, Sec-369, Sec-376, and Sec-378 are each a non-standard amino acid (selenocysteine). Residues 352–381 are disordered; sequence UQISQQLIPTEASTSURUKNQAKKUEUPSN. The segment covering 353 to 369 has biased composition (polar residues); that stretch reads QISQQLIPTEASTSURU.

It belongs to the selenoprotein P family. Phosphorylation sites are present in the extracellular medium.

It localises to the secreted. In terms of biological role, might be responsible for some of the extracellular antioxidant defense properties of selenium or might be involved in the transport of selenium. May supply selenium to tissues such as brain and testis. This Pongo abelii (Sumatran orangutan) protein is Selenoprotein P.